The chain runs to 300 residues: MNKEKVPQNAVPNGRTKLRQVTSATPLDEVFQYWEEDGAIVIKGLLTSAQVEQLNQEMGPILQKVAIGGHASDVRLQNFHGMKTKRAGDLTNNSAVFRDHLLDNDFIHAVSQRCFAYRGKMGPDAYWLGSASTIHVGPGQKPQTLHRDLGSYPIFWMLGPQGPESQINFLVATTDFTEANGATRIIPGSHKWEFNQHGDRDMTIPAEMKAGDCLLISGKVIHGTGGNKTDQERGCLAVTMCANFLAPEEAHPFIVSMGTAKKLPVRSQRCLGFRSQWPQSSPGLWTKDYSELALHLGLDD.

Positions 146, 148, and 222 each coordinate Fe cation.

It belongs to the PhyH family. As to quaternary structure, homodimer. It depends on Fe cation as a cofactor.

It functions in the pathway mycotoxin biosynthesis. In terms of biological role, dioxygenase; part of the gene cluster that mediates the biosynthesis of fumonisins B1 (FB1), B2 (FB2), B3 (FB3), and B4 (FB4), which are carcinogenic mycotoxins. Within the pathway, FUM3 performs the C-5 hydroxylation present in FB1 and FB2 and which occurs late in the biosynthesis. The biosynthesis starts with the FUM1-catalyzed carbon chain assembly from one molecule of acetyl-CoA, eight molecules of malonyl-CoA, and two molecules of methionine (in S-adenosyl form). The C18 polyketide chain is released from the enzyme by a nucleophilic attack of a carbanion, which is derived from R-carbon of alanine by decarboxylation, on the carbonyl carbon of polyketide acyl chain. This step is catalyzed by the pyridoxal 5'-phosphate-dependent aminoacyl transferase FUM8. The resultant 3-keto intermediate is then stereospecifically reduced to a 3-hydroxyl product by reductase FUM13. Subsequent oxidations at C-10 by the cytochrome P450 monooxygenase FUM2, C-14 and C-15 by FUM6, FUM12 or FUM15, tricarballylic esterification of the hydroxyl groups on C-14 and C-15 by acyltransferase FUM14, and C-5 hydroxylation by 2-keto-glutarate-dependent dioxygenase FUM3 furnish the biosynthesis of fumonisins. The tricarballylic moieties are most likely derived from the citric acid cycle, and their addition to the carbon backbone may involve FUM7, FUM10, FUM11 and FUM14. This Gibberella moniliformis (strain M3125 / FGSC 7600) (Maize ear and stalk rot fungus) protein is Dioxygenase FUM3.